The chain runs to 174 residues: NADH-ubiquinone oxidoreductase chain 6 (174 aa).

5 consecutive transmembrane segments (helical) span residues 1–21 (MTYVLFTLSVMLVMGFVGFSS), 24–44 (SPIYGGLALVVSGVVGCMIIL), 47–67 (GGAYLGLVMFLIYLGGMMVVF), 86–106 (FEVLACFLVGLMMEVGLVLWV), and 151–171 (WLVVVAGWTLFVGVYVVIEIT).

The protein belongs to the complex I subunit 6 family. Core subunit of respiratory chain NADH dehydrogenase (Complex I) which is composed of 45 different subunits.

It is found in the mitochondrion inner membrane. The enzyme catalyses a ubiquinone + NADH + 5 H(+)(in) = a ubiquinol + NAD(+) + 4 H(+)(out). Core subunit of the mitochondrial membrane respiratory chain NADH dehydrogenase (Complex I) which catalyzes electron transfer from NADH through the respiratory chain, using ubiquinone as an electron acceptor. Essential for the catalytic activity and assembly of complex I. The protein is NADH-ubiquinone oxidoreductase chain 6 (MT-ND6) of Papio hamadryas (Hamadryas baboon).